Here is a 281-residue protein sequence, read N- to C-terminus: MTQKIIRVGNIEIANDKPFVLFGGMNVLESRDLAMKVCEEYVRVTEKLGIPYVFKASFDKANRSSVTSYRGPGMEEGLKIFEEIKRTFNVPVITDVHEPYQAEPVAKVCDIIQLPAFLSRQTDLVVAMAKTGVVINIKKAQFLAPQEMKHILAKCEEAGNDQLILCERGSSFGYNNLVVDMLGFGIMKQFEYPVFFDVTHALQMPGGRADSAGGRRAQVTDLAKAGMSQGLAGLFLEAHPDPDNAKCDGPCALRLDKLEPFLVQLKQLDDLVKSFPTVETA.

Belongs to the KdsA family.

It localises to the cytoplasm. It catalyses the reaction D-arabinose 5-phosphate + phosphoenolpyruvate + H2O = 3-deoxy-alpha-D-manno-2-octulosonate-8-phosphate + phosphate. It participates in carbohydrate biosynthesis; 3-deoxy-D-manno-octulosonate biosynthesis; 3-deoxy-D-manno-octulosonate from D-ribulose 5-phosphate: step 2/3. The protein operates within bacterial outer membrane biogenesis; lipopolysaccharide biosynthesis. The polypeptide is 2-dehydro-3-deoxyphosphooctonate aldolase 1 (kdsA1) (Pseudomonas putida (strain ATCC 47054 / DSM 6125 / CFBP 8728 / NCIMB 11950 / KT2440)).